The primary structure comprises 468 residues: BTB and MATH domain-containing protein 45 (468 aa).

The MATH domain occupies Val7 to Val124. 2 BTB domains span residues Ser148 to Asp215 and Ser304 to Leu368.

This Caenorhabditis elegans protein is BTB and MATH domain-containing protein 45 (bath-45).